A 310-amino-acid chain; its full sequence is Apolipoprotein E (310 aa).

The first 18 residues, M1–A18, serve as a signal peptide directing secretion. 8 consecutive repeat copies span residues A77–G98, P99–G120, A121–G142, Q143–L164, R165–E186, R187–T208, L209–R226, and G227–Q248. An 8 X 22 AA approximate tandem repeats region spans residues A77 to Q248. The tract at residues H155 to R165 is LDL and other lipoprotein receptors binding. L159 to R162 contributes to the heparin binding site. Residues H207–M283 form a lipid-binding and lipoprotein association region. A222–L229 contributes to the heparin binding site. Residues N259 to Q310 form a homooligomerization region. The segment at R271–M283 is specificity for association with VLDL.

The protein belongs to the apolipoprotein A1/A4/E family. Homotetramer. May interact with ABCA1; functionally associated with ABCA1 in the biogenesis of HDLs. May interact with APP/A4 amyloid-beta peptide; the interaction is extremely stable in vitro but its physiological significance is unclear. May interact with MAPT. May interact with MAP2. In the cerebrospinal fluid, interacts with secreted SORL1. Interacts with PMEL; this allows the loading of PMEL luminal fragment on ILVs to induce fibril nucleation. APOE exists as multiple glycosylated and sialylated glycoforms within cells and in plasma. The extent of glycosylation and sialylation are tissue and context specific. Post-translationally, glycated in plasma VLDL. In terms of processing, phosphorylated by FAM20C in the extracellular medium.

It is found in the secreted. Its subcellular location is the extracellular space. It localises to the extracellular matrix. The protein localises to the extracellular vesicle. The protein resides in the endosome. It is found in the multivesicular body. In terms of biological role, APOE is an apolipoprotein, a protein associating with lipid particles, that mainly functions in lipoprotein-mediated lipid transport between organs via the plasma and interstitial fluids. APOE is a core component of plasma lipoproteins and is involved in their production, conversion and clearance. Apolipoproteins are amphipathic molecules that interact both with lipids of the lipoprotein particle core and the aqueous environment of the plasma. As such, APOE associates with chylomicrons, chylomicron remnants, very low density lipoproteins (VLDL) and intermediate density lipoproteins (IDL) but shows a preferential binding to high-density lipoproteins (HDL). It also binds a wide range of cellular receptors including the LDL receptor/LDLR and the very low-density lipoprotein receptor/VLDLR that mediate the cellular uptake of the APOE-containing lipoprotein particles. Finally, APOE also has a heparin-binding activity and binds heparan-sulfate proteoglycans on the surface of cells, a property that supports the capture and the receptor-mediated uptake of APOE-containing lipoproteins by cells. The protein is Apolipoprotein E (APOE) of Dicerorhinus sumatrensis harrissoni (Bornean rhinoceros).